Reading from the N-terminus, the 460-residue chain is Ammonium transporter Rh type B-B (460 aa).

The Cytoplasmic portion of the chain corresponds to 1 to 10 (MTSYSTNMRI). The helical transmembrane segment at 11 to 31 (KLPLFCLLLQFITIILFAVFV) threads the bilayer. At 32–62 (RYDHESDARGWHEELNNHSSSNADNDFYYRY) the chain is on the extracellular side. Residue asparagine 48 is glycosylated (N-linked (GlcNAc...) asparagine). The chain crosses the membrane as a helical span at residues 63–83 (PSFQDVHVMIFIGFGFLMTFL). Topologically, residues 84–87 (KRYG) are cytoplasmic. A helical transmembrane segment spans residues 88-108 (FSSVAFNFLIAAFGLQWSTLI). The Extracellular portion of the chain corresponds to 109 to 125 (QGFFHGFHDGKIHVGIE). The chain crosses the membrane as a helical span at residues 126–146 (SMINADFCTGAVLISFGAVLG). Over 147–150 (KTSP) the chain is Cytoplasmic. The chain crosses the membrane as a helical span at residues 151–171 (VQLIIMTLVEVTLFGINEYII). At 172 to 179 (LNIVGAKD) the chain is on the extracellular side. A helical transmembrane segment spans residues 180–202 (AGGSMTIHTFGAYFGLIVSRVLY). Topologically, residues 203–220 (REDLEKSRQREGSVYHSD) are cytoplasmic. A helical membrane pass occupies residues 221–241 (LFAMIGTIYLWMFWPSFNSAV). Topologically, residues 242-252 (TAHGDDQHRTV) are extracellular. Residues 253-273 (MNTYYSLAACTLATFGFSALL) traverse the membrane as a helical segment. Over 274 to 283 (NGEGKLDMVH) the chain is Cytoplasmic. The chain crosses the membrane as a helical span at residues 284 to 304 (IQNAALAGGVAVGTSGEMMLT). Position 305 (proline 305) is a topological domain, extracellular. A helical membrane pass occupies residues 306 to 326 (FGAMIAGTLAGMISVLGYKYL). Over 327-347 (TPVLDSKLKIQDTCGVHNLHG) the chain is Cytoplasmic. A helical membrane pass occupies residues 348–368 (MPGILGAIIGAIVALFATADI). Over 369-394 (YGDGMGDVFPLISDGSRTAKQQSLYQ) the chain is Extracellular. Residues 395–415 (FLALLVALGFAIIGGTVVGFI) traverse the membrane as a helical segment. Residues 416 to 460 (LKLPIFGTPSDAECFEDAIYWEVPGGEGHQQLTVVINNEDPDTQA) are Cytoplasmic-facing.

This sequence belongs to the ammonium transporter (TC 2.A.49) family. Rh subfamily.

Its subcellular location is the basolateral cell membrane. The protein localises to the cytoplasmic vesicle membrane. In terms of biological role, functions as a specific ammonium transporter. In Xenopus laevis (African clawed frog), this protein is Ammonium transporter Rh type B-B (rhbg-b).